We begin with the raw amino-acid sequence, 189 residues long: Accessory gene regulator protein B (189 aa).

Helical transmembrane passes span 49 to 69 (IAYI…FYLI), 81 to 100 (SFWC…LVIV), 110 to 130 (IILT…ATKK), 143 to 163 (YYAI…KEPF), and 164 to 184 (AQFI…IFFI).

It belongs to the AgrB family.

It localises to the cell membrane. Its function is as follows. Essential for the production of a quorum sensing system signal molecule, the autoinducing peptide (AIP). This quorum sensing system is responsible for the regulation of the expression of virulence factor genes. Involved in the proteolytic processing of AgrD, the precursor of AIP. The chain is Accessory gene regulator protein B from Staphylococcus aureus (strain COL).